The sequence spans 62 residues: U8-theraphotoxin-Cg1a 1 (62 aa).

Residues 1–21 form the signal peptide; that stretch reads MKTLVLFIIFGLAALFLLSSA. Positions 22–29 are excised as a propeptide; sequence NELEETER. 3 disulfide bridges follow: Cys31-Cys46, Cys38-Cys51, and Cys45-Cys58.

This sequence belongs to the neurotoxin 10 (Hwtx-1) family. 30 (Jztx-14) subfamily. In terms of tissue distribution, expressed by the venom gland.

The protein localises to the secreted. Functionally, probable ion channel inhibitor. This is U8-theraphotoxin-Cg1a 1 from Chilobrachys guangxiensis (Chinese earth tiger tarantula).